The primary structure comprises 591 residues: Putative F-box protein At1g32140 (591 aa).

Residues 2–49 enclose the F-box domain; sequence TMMSDLSLDLVEEILCRVPITSLKAVRSSCKLWNVLSKNRILCKTEAR. The segment covering 567–581 has biased composition (basic residues); the sequence is AGRKRKEKKTKRKSK. The interval 567–591 is disordered; it reads AGRKRKEKKTKRKSKDKQMKLSNKV.

In Arabidopsis thaliana (Mouse-ear cress), this protein is Putative F-box protein At1g32140.